The following is a 446-amino-acid chain: SPARC-related modular calcium-binding protein 2 (446 aa).

Residues 1–21 form the signal peptide; sequence MLLPQLCWLPLLAGLLPPVPA. The Kazal-like domain occupies 34 to 86; that stretch reads QDKDKDCSLDCAGSPQKPLCASDGRTFLSRCEFQRAKCKDPQLEIAYRGNCKD. Cystine bridges form between C40–C71, C44–C64, C53–C84, C90–C113, C124–C131, and C133–C153. The region spanning 87-153 is the Thyroglobulin type-1 1 domain; sequence VSRCVAERKY…TAVAHKTPRC (67 aa). The disordered stretch occupies residues 147–228; sequence AHKTPRCPGS…EHQSALEEAK (82 aa). The span at 161–172 shows a compositional bias: basic and acidic residues; the sequence is LPQREGTGKTDD. N206 is a glycosylation site (N-linked (GlcNAc...) asparagine). The span at 206–216 shows a compositional bias: polar residues; the sequence is NKTNKNSVSSC. The Thyroglobulin type-1 2 domain maps to 213–281; it reads VSSCDQEHQS…TSTRYEQPKC (69 aa). 3 disulfide bridges follow: C216–C240, C251–C258, and C260–C281. A compositionally biased stretch (basic and acidic residues) spans 217 to 228; that stretch reads DQEHQSALEEAK. 2 consecutive EF-hand domains span residues 347 to 382 and 384 to 419; these read LEERVVHWYFKLLDKNSSGDIGKKEIKPFKRFLRKK and KPKKCVKKFVEYCDVNNDKSISVQELMGCLGVAKED. D360, N362, S364, D366, E371, D397, N399, D401, S403, and E408 together coordinate Ca(2+). N-linked (GlcNAc...) asparagine glycosylation is present at N362. A disordered region spans residues 416 to 446; the sequence is AKEDGKADTKKRHTPRGHAESTSNRQPRKQG.

As to quaternary structure, binds various proteins from the extracellular matrix.

The protein resides in the secreted. It localises to the extracellular space. Its subcellular location is the extracellular matrix. It is found in the basement membrane. Its function is as follows. Promotes matrix assembly and cell adhesiveness. Can stimulate endothelial cell proliferation, migration, as well as angiogenesis. The polypeptide is SPARC-related modular calcium-binding protein 2 (SMOC2) (Homo sapiens (Human)).